A 453-amino-acid polypeptide reads, in one-letter code: 5-hydroxytryptamine receptor 1 (453 aa).

The Extracellular segment spans residues 1–36 (MKSLKSSTHDVPHPEHVVWAPPAYDEQHHLFFSHGT). Residues 37-57 (VLIGIVGSLIITVAVVGNVLV) traverse the membrane as a helical segment. The Cytoplasmic segment spans residues 58 to 74 (CLAIFTEPILSHSKSNF). The helical transmembrane segment at 75–94 (FIVSLAVADLLLALLVMTFA) threads the bilayer. The Extracellular portion of the chain corresponds to 95–110 (LVNDMYGYWLFGETFC). Cys-110 and Cys-225 are joined by a disulfide. A helical membrane pass occupies residues 111 to 133 (FIWMSADVMCETASIFSICVISY). Over 134-153 (DRLKQVQKPLHYEEFMTTTR) the chain is Cytoplasmic. A helical membrane pass occupies residues 154–175 (ALLIIACLWICSFVLSFVPIFL). At 176-223 (EWHELSVEEIKAIFKDNKTEKEKALEAHNFSSALNQTLGDNQKSNAKH) the chain is on the extracellular side. Residues 224–244 (VCLFDVHFTYSVIYSFICFYV) traverse the membrane as a helical segment. The Cytoplasmic segment spans residues 245-301 (PCTLMLTNYLRLFLIAQTHQVRIRSLQMTNPPQLRGQGASSYRNQGTQGSKAARTLT). The helical transmembrane segment at 302-322 (IITGTFLACWLPFFIINPIAA) threads the bilayer. The Extracellular segment spans residues 323-331 (ADEHLIPLE). Residues 332 to 352 (CFMVTIWLGYFNSSVNPIIYG) traverse the membrane as a helical segment. Over 353-453 (TSNSKFRAAF…VFDSDTAFSS (101 aa)) the chain is Cytoplasmic. The interval 397–428 (DLSSSEHPSDACDTGRGKNSKGGDCATADPTK) is disordered. Residues 403–412 (HPSDACDTGR) show a composition bias toward basic and acidic residues.

This sequence belongs to the G-protein coupled receptor 1 family. In terms of tissue distribution, reproductive system.

Its subcellular location is the cell membrane. This is one of the several different receptors for 5-hydroxytryptamine (serotonin). 5-HT plays important roles in various behavioral and physiological processes in aplysia. These include feeding, locomotion, circadian rhythm, learning and memory, synaptic plasticity, and synaptic growth. This receptor is mediated by G proteins that stimulate phospholipase C. This is 5-hydroxytryptamine receptor 1 (5HTB1) from Aplysia californica (California sea hare).